Reading from the N-terminus, the 182-residue chain is Peptide methionine sulfoxide reductase MsrA (182 aa).

The active site involves cysteine 13.

The protein belongs to the MsrA Met sulfoxide reductase family.

It carries out the reaction L-methionyl-[protein] + [thioredoxin]-disulfide + H2O = L-methionyl-(S)-S-oxide-[protein] + [thioredoxin]-dithiol. It catalyses the reaction [thioredoxin]-disulfide + L-methionine + H2O = L-methionine (S)-S-oxide + [thioredoxin]-dithiol. In terms of biological role, has an important function as a repair enzyme for proteins that have been inactivated by oxidation. Catalyzes the reversible oxidation-reduction of methionine sulfoxide in proteins to methionine. The sequence is that of Peptide methionine sulfoxide reductase MsrA from Mycobacterium bovis (strain ATCC BAA-935 / AF2122/97).